The chain runs to 274 residues: Putative HTH-type transcriptional regulator RmpR (274 aa).

The 71-residue stretch at isoleucine 18 to glutamine 88 folds into the HTH gntR-type domain. Residues glutamate 46–serine 65 constitute a DNA-binding region (H-T-H motif). Residues serine 250 to alanine 265 show a composition bias toward polar residues. Residues serine 250–glutamine 274 form a disordered region.

Functionally, may regulate the transcription of the rmpAB operon. This Mycobacterium gastri protein is Putative HTH-type transcriptional regulator RmpR (rmpR).